The chain runs to 120 residues: Putative B3 domain-containing protein At3g28853 (120 aa).

Positions 19 to 120 form a DNA-binding region, TF-B3; sequence INKRLTQSDV…DKSNEVFYII (102 aa).

The protein localises to the nucleus. In Arabidopsis thaliana (Mouse-ear cress), this protein is Putative B3 domain-containing protein At3g28853.